The following is a 257-amino-acid chain: Uracil phosphoribosyltransferase (257 aa).

5-phospho-alpha-D-ribose 1-diphosphate-binding positions include Arg-77, Arg-102, and 129 to 137 (DPMLATGGS). Residues Ile-192 and 197 to 199 (GDA) each bind uracil. Asp-198 is a 5-phospho-alpha-D-ribose 1-diphosphate binding site. The interval 203 to 257 (QFGPNLFTSSAPSRPEAPAGRGRAAAKTPGRRSARSESPSSTSPSARSRKAAPPA) is disordered. 2 stretches are compositionally biased toward low complexity: residues 211–230 (SSAP…AAKT) and 238–248 (SESPSSTSPSA).

Belongs to the UPRTase family. Mg(2+) is required as a cofactor.

The enzyme catalyses UMP + diphosphate = 5-phospho-alpha-D-ribose 1-diphosphate + uracil. The protein operates within pyrimidine metabolism; UMP biosynthesis via salvage pathway; UMP from uracil: step 1/1. Allosterically activated by GTP. In terms of biological role, catalyzes the conversion of uracil and 5-phospho-alpha-D-ribose 1-diphosphate (PRPP) to UMP and diphosphate. This Mycolicibacterium paratuberculosis (strain ATCC BAA-968 / K-10) (Mycobacterium paratuberculosis) protein is Uracil phosphoribosyltransferase.